We begin with the raw amino-acid sequence, 868 residues long: Alanine--tRNA ligase (868 aa).

His555, His559, Cys657, and His661 together coordinate Zn(2+). The interval 828-847 (SQVGGKGGGRPDMAQAGGSE) is disordered.

It belongs to the class-II aminoacyl-tRNA synthetase family. Requires Zn(2+) as cofactor.

It localises to the cytoplasm. The catalysed reaction is tRNA(Ala) + L-alanine + ATP = L-alanyl-tRNA(Ala) + AMP + diphosphate. Catalyzes the attachment of alanine to tRNA(Ala) in a two-step reaction: alanine is first activated by ATP to form Ala-AMP and then transferred to the acceptor end of tRNA(Ala). Also edits incorrectly charged Ser-tRNA(Ala) and Gly-tRNA(Ala) via its editing domain. The polypeptide is Alanine--tRNA ligase (Pseudoalteromonas translucida (strain TAC 125)).